A 286-amino-acid polypeptide reads, in one-letter code: 4-hydroxybenzoate octaprenyltransferase (286 aa).

The next 7 membrane-spanning stretches (helical) occupy residues 21-40, 95-115, 142-162, 167-187, 210-230, 235-255, and 266-286; these read GTLLLLWPCLMALMLAAGGM, ILFVILGLSAFGLVLLLNGLV, FLGIVWSWSIPMAYAAQTGEV, WWLFAANWCWTVAYDTMYAMV, QIIGLFQLAALACFIAAGWSA, LYGLGILTFVGFSTYQQMLIF, and FLNNNWAGLALFVGLGADYLI.

Belongs to the UbiA prenyltransferase family. Requires Mg(2+) as cofactor.

It is found in the cell inner membrane. The catalysed reaction is all-trans-octaprenyl diphosphate + 4-hydroxybenzoate = 4-hydroxy-3-(all-trans-octaprenyl)benzoate + diphosphate. It participates in cofactor biosynthesis; ubiquinone biosynthesis. Catalyzes the prenylation of para-hydroxybenzoate (PHB) with an all-trans polyprenyl group. Mediates the second step in the final reaction sequence of ubiquinone-8 (UQ-8) biosynthesis, which is the condensation of the polyisoprenoid side chain with PHB, generating the first membrane-bound Q intermediate 3-octaprenyl-4-hydroxybenzoate. The chain is 4-hydroxybenzoate octaprenyltransferase from Shewanella baltica (strain OS155 / ATCC BAA-1091).